The following is a 336-amino-acid chain: Tyrosine phosphatase-like protein H1 (336 aa).

One can recognise a Tyrosine-protein phosphatase domain in the interval 27–295 (IKKEHHKLMK…EICYRVLCEA (269 aa)).

Belongs to the protein-tyrosine phosphatase family.

This Microplitis demolitor (Parasitoid wasp) protein is Tyrosine phosphatase-like protein H1 (H1).